Reading from the N-terminus, the 298-residue chain is Heat stress transcription factor C-2a (298 aa).

The tract at residues 105–128 (SSGGGGAKRKEEAGGCGGGGEAAA) is disordered. The hydrophobic repeat HR-A/B stretch occupies residues 145 to 181 (LRREQREIEGRVAAMWRRVQETERRPKQMLAFLVKVV). The short motif at 213-216 (KRPR) is the Nuclear localization signal element.

The protein belongs to the HSF family. Class C subfamily. As to quaternary structure, homotrimer. Post-translationally, exhibits temperature-dependent phosphorylation.

Its subcellular location is the nucleus. Its function is as follows. Transcriptional regulator that specifically binds DNA of heat shock promoter elements (HSE). The chain is Heat stress transcription factor C-2a (HSFC2A) from Oryza sativa subsp. japonica (Rice).